A 361-amino-acid polypeptide reads, in one-letter code: S-adenosylmethionine:tRNA ribosyltransferase-isomerase (361 aa).

It belongs to the QueA family. In terms of assembly, monomer.

The protein resides in the cytoplasm. The enzyme catalyses 7-aminomethyl-7-carbaguanosine(34) in tRNA + S-adenosyl-L-methionine = epoxyqueuosine(34) in tRNA + adenine + L-methionine + 2 H(+). It participates in tRNA modification; tRNA-queuosine biosynthesis. Its function is as follows. Transfers and isomerizes the ribose moiety from AdoMet to the 7-aminomethyl group of 7-deazaguanine (preQ1-tRNA) to give epoxyqueuosine (oQ-tRNA). In Glaesserella parasuis serovar 5 (strain SH0165) (Haemophilus parasuis), this protein is S-adenosylmethionine:tRNA ribosyltransferase-isomerase.